Reading from the N-terminus, the 299-residue chain is Taste receptor type 2 member 5 (299 aa).

A topological domain (extracellular) is located at residue methionine 1. Residues 2–22 (LSAGLGLLMLVAVVEFLIGLI) form a helical membrane-spanning segment. At 23–45 (GNGVLVVWSFREWIRKFSWSSYN) the chain is on the cytoplasmic side. Residues 46–66 (LIILGLAGCRFVLQWLIILDL) traverse the membrane as a helical segment. The Extracellular portion of the chain corresponds to 67 to 82 (SLFPLFQSSRWLRYLS). A helical membrane pass occupies residues 83 to 103 (IFWVLVSQASLWFATFLSVFY). At 104-127 (CKKITTFDHPAYLWLKQRAYNLSL) the chain is on the cytoplasmic side. Residues 128–148 (WCLLGYFIINLLLTVQIGLMF) form a helical membrane-spanning segment. At 149 to 175 (YHPPQGNSSIRYPFESWQYLYAFRLNS) the chain is on the extracellular side. N-linked (GlcNAc...) asparagine glycosylation occurs at asparagine 155. A helical membrane pass occupies residues 176-196 (GSYLPLMVFLVSSGMLIVSLY). Over 197–223 (THHKKMKVHSAGRRDVRAKAHITALKS) the chain is Cytoplasmic. Residues 224 to 244 (LGCFLLLHLVYIMASPFSIAS) form a helical membrane-spanning segment. Over 245–253 (KTYPPDLTS) the chain is Extracellular. A helical membrane pass occupies residues 254-274 (VFIWETLMAAYPSLHSLILIM). Topologically, residues 275 to 299 (GIPRVKQTCQKIXWKTVCARRCWGP) are cytoplasmic.

Belongs to the G-protein coupled receptor T2R family.

The protein localises to the membrane. Functionally, receptor that may play a role in the perception of bitterness and is gustducin-linked. May play a role in sensing the chemical composition of the gastrointestinal content. The activity of this receptor may stimulate alpha gustducin, mediate PLC-beta-2 activation and lead to the gating of TRPM5. The sequence is that of Taste receptor type 2 member 5 (TAS2R5) from Pan troglodytes (Chimpanzee).